Here is a 1026-residue protein sequence, read N- to C-terminus: Multidrug resistance protein MdtC (1026 aa).

Transmembrane regions (helical) follow at residues 15-35 (ILIA…LPVA), 333-353 (EVEE…FLFL), 360-380 (LIPA…MYLC), 387-407 (LSLM…IVVL), 431-451 (VGFT…PLLL), 463-483 (FAVT…TLTP), 528-548 (LVGV…IAIP), 853-873 (LILI…LYES), 897-917 (LFNA…IGIV), 953-973 (PIMM…LSGG), and 984-1004 (ITIV…TPVV).

The protein belongs to the resistance-nodulation-cell division (RND) (TC 2.A.6) family. MdtC subfamily. As to quaternary structure, part of a tripartite efflux system composed of MdtA, MdtB and MdtC. MdtC forms a heteromultimer with MdtB.

The protein resides in the cell inner membrane. The sequence is that of Multidrug resistance protein MdtC from Salmonella schwarzengrund (strain CVM19633).